Consider the following 501-residue polypeptide: Protein DETOXIFICATION 37 (501 aa).

12 consecutive transmembrane segments (helical) span residues 44–64 (MMIE…VYVI), 84–104 (LAAA…LLLG), 134–154 (VVLI…NPIL), 163–183 (VATL…AYAV), 200–220 (SAYI…IAVY), 222–242 (LGYG…IIVV), 280–300 (AVML…AGLL), 310–330 (LAIC…FNAA), 352–372 (VVTT…VLSW), 396–416 (FLAI…VAVG), 422–442 (FVAY…GFVL), and 453–473 (IWTG…IVTL).

Belongs to the multi antimicrobial extrusion (MATE) (TC 2.A.66.1) family.

The protein localises to the membrane. The sequence is that of Protein DETOXIFICATION 37 from Arabidopsis thaliana (Mouse-ear cress).